A 552-amino-acid chain; its full sequence is CTP synthase (552 aa).

The interval 1–267 (MSKFVFVTGG…AHQTLELLRM (267 aa)) is amidoligase domain. Ser13 contacts CTP. Ser13 contacts UTP. Residues 14 to 19 (SIGKGI) and Asp71 each bind ATP. Residues Asp71 and Glu141 each coordinate Mg(2+). CTP is bound by residues 148 to 150 (DIE), 188 to 193 (KTKPTQ), and Lys224. UTP-binding positions include 188–193 (KTKPTQ) and Lys224. The region spanning 292 to 534 (TVALVGKYVQ…INAVLKRRNA (243 aa)) is the Glutamine amidotransferase type-1 domain. L-glutamine is bound at residue Gly354. Cys381 (nucleophile; for glutamine hydrolysis) is an active-site residue. L-glutamine is bound by residues 382–385 (LGMQ), Glu405, and Arg462. Catalysis depends on residues His507 and Glu509.

The protein belongs to the CTP synthase family. In terms of assembly, homotetramer.

The enzyme catalyses UTP + L-glutamine + ATP + H2O = CTP + L-glutamate + ADP + phosphate + 2 H(+). It carries out the reaction L-glutamine + H2O = L-glutamate + NH4(+). The catalysed reaction is UTP + NH4(+) + ATP = CTP + ADP + phosphate + 2 H(+). It participates in pyrimidine metabolism; CTP biosynthesis via de novo pathway; CTP from UDP: step 2/2. With respect to regulation, allosterically activated by GTP, when glutamine is the substrate; GTP has no effect on the reaction when ammonia is the substrate. The allosteric effector GTP functions by stabilizing the protein conformation that binds the tetrahedral intermediate(s) formed during glutamine hydrolysis. Inhibited by the product CTP, via allosteric rather than competitive inhibition. In terms of biological role, catalyzes the ATP-dependent amination of UTP to CTP with either L-glutamine or ammonia as the source of nitrogen. Regulates intracellular CTP levels through interactions with the four ribonucleotide triphosphates. The protein is CTP synthase of Synechocystis sp. (strain ATCC 27184 / PCC 6803 / Kazusa).